The primary structure comprises 271 residues: Phosphate import ATP-binding protein PstB (271 aa).

Residues 25–266 form the ABC transporter domain; the sequence is FDTKNLNLWY…PSDKRTEDYI (242 aa). 57–64 is a binding site for ATP; that stretch reads GPSGCGKS.

This sequence belongs to the ABC transporter superfamily. Phosphate importer (TC 3.A.1.7) family. In terms of assembly, the complex is composed of two ATP-binding proteins (PstB), two transmembrane proteins (PstC and PstA) and a solute-binding protein (PstS).

It is found in the cell membrane. The enzyme catalyses phosphate(out) + ATP + H2O = ADP + 2 phosphate(in) + H(+). In terms of biological role, part of the ABC transporter complex PstSACB involved in phosphate import. Responsible for energy coupling to the transport system. This Bacillus cereus (strain ATCC 14579 / DSM 31 / CCUG 7414 / JCM 2152 / NBRC 15305 / NCIMB 9373 / NCTC 2599 / NRRL B-3711) protein is Phosphate import ATP-binding protein PstB.